The following is a 348-amino-acid chain: Lipopolysaccharide heptosyltransferase 2 (348 aa).

Belongs to the glycosyltransferase 9 family.

It catalyses the reaction an L-alpha-D-Hep-(1-&gt;5)-[alpha-Kdo-(2-&gt;4)]-alpha-Kdo-(2-&gt;6)-lipid A + ADP-L-glycero-beta-D-manno-heptose = an L-alpha-D-Hep-(1-&gt;3)-L-alpha-D-Hep-(1-&gt;5)-[alpha-Kdo-(2-&gt;4)]-alpha-Kdo-(2-&gt;6)-lipid A + ADP + H(+). It functions in the pathway bacterial outer membrane biogenesis; LPS core biosynthesis. Glycosyltransferase involved in the biosynthesis of the core oligosaccharide region of lipopolysaccharide (LPS). Catalyzes the addition of the second heptose unit to the heptosyl-Kdo2-lipid A module. The polypeptide is Lipopolysaccharide heptosyltransferase 2 (Salmonella typhimurium (strain LT2 / SGSC1412 / ATCC 700720)).